Reading from the N-terminus, the 144-residue chain is Eukaryotic translation initiation factor 1A, Y-chromosomal (144 aa).

Positions 1–15 (MPKNKGKGGKNRRRG) are enriched in basic residues. The interval 1–26 (MPKNKGKGGKNRRRGKNENESEKREL) is disordered. Basic and acidic residues predominate over residues 16-26 (KNENESEKREL). Positions 22–96 (EKRELVFKED…NKADVILKYN (75 aa)) constitute an S1-like domain. A Glycyl lysine isopeptide (Lys-Gly) (interchain with G-Cter in ubiquitin) cross-link involves residue Lys-88. Positions 114–144 (KINETDTFGPGDDDEIQFDDIGDDDEDIDDI) are disordered. A compositionally biased stretch (acidic residues) spans 124–144 (GDDDEIQFDDIGDDDEDIDDI).

It belongs to the eIF-1A family. In terms of assembly, component of the 43S pre-initiation complex (43S PIC), which is composed of the 40S ribosomal subunit, EIF1, eIF1A (EIF1AX), eIF3 complex, EIF5 and eIF2-GTP-initiator tRNA complex (eIF2 ternary complex). Interacts with EIF5; this interaction contributes to the maintenance of EIF1 within the open 43S PIC. Interacts through its C-terminal domain (CTD) with the CTD of EIF5B; from the location of the start codon by the 43S complex until the formation of the 80S complex. In terms of tissue distribution, ubiquitous.

Its subcellular location is the cytoplasm. Component of the 43S pre-initiation complex (43S PIC), which binds to the mRNA cap-proximal region, scans mRNA 5'-untranslated region, and locates the initiation codon. This protein enhances formation of the cap-proximal complex. Together with EIF1, facilitates scanning, start codon recognition, promotion of the assembly of 48S complex at the initiation codon (43S PIC becomes 48S PIC after the start codon is reached), and dissociation of aberrant complexes. After start codon location, together with EIF5B orients the initiator methionine-tRNA in a conformation that allows 60S ribosomal subunit joining to form the 80S initiation complex. Is released after 80S initiation complex formation, just after GTP hydrolysis by EIF5B, and before release of EIF5B. Its globular part is located in the A site of the 40S ribosomal subunit. Its interaction with EIF5 during scanning contribute to the maintenance of EIF1 within the open 43S PIC. In contrast to yeast orthologs, does not bind EIF1. The chain is Eukaryotic translation initiation factor 1A, Y-chromosomal (EIF1AY) from Homo sapiens (Human).